Reading from the N-terminus, the 468-residue chain is Aspartate ammonia-lyase (468 aa).

L-aspartate-binding residues include Thr-99, Ser-138, Thr-139, Asn-140, and Thr-185. The interval Gly-315–Asn-324 is SS loop. Residue Ser-316 is the Proton acceptor of the active site. The L-aspartate site is built by Ser-317 and Lys-322.

It belongs to the class-II fumarase/aspartase family. Aspartase subfamily. In terms of assembly, homotetramer.

The catalysed reaction is L-aspartate = fumarate + NH4(+). In terms of biological role, catalyzes the reversible conversion of L-aspartate to fumarate and ammonia. In Helicobacter pylori (strain ATCC 700392 / 26695) (Campylobacter pylori), this protein is Aspartate ammonia-lyase (aspA).